The sequence spans 340 residues: Phosphate acyltransferase (340 aa).

The protein belongs to the PlsX family. Homodimer. Probably interacts with PlsY.

It is found in the cytoplasm. It carries out the reaction a fatty acyl-[ACP] + phosphate = an acyl phosphate + holo-[ACP]. It functions in the pathway lipid metabolism; phospholipid metabolism. Catalyzes the reversible formation of acyl-phosphate (acyl-PO(4)) from acyl-[acyl-carrier-protein] (acyl-ACP). This enzyme utilizes acyl-ACP as fatty acyl donor, but not acyl-CoA. The sequence is that of Phosphate acyltransferase from Pseudomonas savastanoi pv. phaseolicola (strain 1448A / Race 6) (Pseudomonas syringae pv. phaseolicola (strain 1448A / Race 6)).